Consider the following 398-residue polypeptide: Arylacetamide deacetylase (398 aa).

At 1 to 4 the chain is on the cytoplasmic side; sequence GVKT. A helical; Signal-anchor for type II membrane protein transmembrane segment spans residues 5–22; the sequence is VLLLIVGVLGAYYVYTPL. At 23–398 the chain is on the lumenal side; that stretch reads PDNIEEPWRL…QYFEWLRENV (376 aa). A glycan (N-linked (GlcNAc...) asparagine) is linked at N77. The Involved in the stabilization of the negatively charged intermediate by the formation of the oxyanion hole motif lies at 110-112; the sequence is HGG. A disulfide bridge links C115 with C339. S188 is an active-site residue. N281 carries N-linked (GlcNAc...) asparagine glycosylation. Active-site residues include D342 and H372.

Belongs to the 'GDXG' lipolytic enzyme family. Post-translationally, glycosylated.

It localises to the endoplasmic reticulum membrane. The protein localises to the microsome membrane. The enzyme catalyses a triacylglycerol + H2O = a diacylglycerol + a fatty acid + H(+). With respect to regulation, inhibited by diisopropylphosphofluoridate (DFP). In terms of biological role, displays cellular triglyceride lipase activity in liver, increases the levels of intracellular fatty acids derived from the hydrolysis of newly formed triglyceride stores and plays a role in very low-density lipoprotein assembly. Displays serine esterase activity in liver. Deacetylates a variety of arylacetamide substrates, including xenobiotic compounds and procarcinogens, converting them to the primary arylamide compounds and increasing their toxicity. The protein is Arylacetamide deacetylase of Oryctolagus cuniculus (Rabbit).